A 282-amino-acid chain; its full sequence is 4-diphosphocytidyl-2-C-methyl-D-erythritol kinase (282 aa).

Residue lysine 9 is part of the active site. 98–108 (PMGGGLGGGSS) provides a ligand contact to ATP. Residue aspartate 140 is part of the active site.

Belongs to the GHMP kinase family. IspE subfamily. As to quaternary structure, homodimer.

It catalyses the reaction 4-CDP-2-C-methyl-D-erythritol + ATP = 4-CDP-2-C-methyl-D-erythritol 2-phosphate + ADP + H(+). The protein operates within isoprenoid biosynthesis; isopentenyl diphosphate biosynthesis via DXP pathway; isopentenyl diphosphate from 1-deoxy-D-xylulose 5-phosphate: step 3/6. Catalyzes the phosphorylation of the position 2 hydroxy group of 4-diphosphocytidyl-2C-methyl-D-erythritol. This Klebsiella pneumoniae (strain 342) protein is 4-diphosphocytidyl-2-C-methyl-D-erythritol kinase.